The following is a 1109-amino-acid chain: Receptor-like protein kinase (1109 aa).

Positions 1–20 (MKVAVNTFLLFLCSTSSIYA) are cleaved as a signal peptide. Over 21–764 (AFALNSDGAA…GGLSTLGIAM (744 aa)) the chain is Extracellular. Residues Asn50, Asn74, and Asn114 are each glycosylated (N-linked (GlcNAc...) asparagine). LRR repeat units follow at residues 69–92 (FVDT…SHLK), 93–115 (HLKK…LGNC), 117–140 (LLEH…GALQ), 141–162 (NLRN…SLLS), 165–187 (HLET…IGNM), and 189–209 (ELTT…SSLG). 3 N-linked (GlcNAc...) asparagine glycosylation sites follow: Asn144, Asn177, and Asn186. N-linked (GlcNAc...) asparagine glycosylation is present at Asn210. LRR repeat units follow at residues 213–236 (TLQE…NNLE), 237–258 (NLVY…DFVS), 261–284 (QIDT…GNCT), 309–331 (KLDT…LGKC), 333–355 (SMID…LGML), 357–378 (QLQY…SIWK), 381–404 (SLQS…TELK), 405–427 (QLVS…LGAN), 429–451 (SLEV…LCSQ), 453–476 (KLKR…GGCS), 477–499 (TLER…VEKQ), 500–523 (NLLF…GNLK), 524–546 (NVTA…LGSL), 548–569 (KLEH…ELSN), 572–595 (KLSE…GSLT), 596–618 (ELTK…LFQS), 620–642 (KLLN…GALQ), 643–666 (ALRS…GKLK), 667–689 (MLEE…STIQ), and 690–710 (SLTF…PSLT). Asn245 and Asn282 each carry an N-linked (GlcNAc...) asparagine glycan. N-linked (GlcNAc...) asparagine glycosylation is found at Asn367, Asn391, and Asn427. N-linked (GlcNAc...) asparagine glycosylation is found at Asn510, Asn524, Asn553, and Asn584. N-linked (GlcNAc...) asparagine glycosylation is found at Asn648, Asn677, and Asn695. Residues 765-785 (IVLGALLFIICLFLFSAFLFL) form a helical membrane-spanning segment. Over 786–1109 (HCKKSVQEIA…YSSSVRNKSK (324 aa)) the chain is Cytoplasmic. The 281-residue stretch at 816–1096 (LNDKYVIGKG…DVVKQLTRWS (281 aa)) folds into the Protein kinase domain. ATP is bound by residues 822-830 (IGKGAHGTI) and Lys845. An LRR 27 repeat occupies 827–850 (HGTIYKATLSPDKVYAVKKLVFTG). Asp942 serves as the catalytic Proton acceptor. Residues 958–981 (ISDFGIAKLLDQSATSIPSNTVQG) form an LRR 28 repeat.

The protein belongs to the protein kinase superfamily. Ser/Thr protein kinase family. As to expression, INRPK1 and INRPK1b are expressed in leaves, cotyledons, shoot tips and roots from induced and vegetative plants. The highest concentrations of INRPK1 are found in vegetative roots, and the lowest concentrations in vegetative cotyledons. INRPK1b is more abundant in roots than other tissues. INRPK1a is expressed in vegetative roots. INRPK1c is expressed in cotyledons.

The protein localises to the cell membrane. The protein resides in the secreted. It carries out the reaction L-seryl-[protein] + ATP = O-phospho-L-seryl-[protein] + ADP + H(+). The catalysed reaction is L-threonyl-[protein] + ATP = O-phospho-L-threonyl-[protein] + ADP + H(+). Possible role in short-day photoperiod floral induction. This chain is Receptor-like protein kinase (INRPK1), found in Ipomoea nil (Japanese morning glory).